Here is an 89-residue protein sequence, read N- to C-terminus: UPF0297 protein MGAS9429_Spy1808 (89 aa).

It belongs to the UPF0297 family.

The sequence is that of UPF0297 protein MGAS9429_Spy1808 from Streptococcus pyogenes serotype M12 (strain MGAS9429).